The chain runs to 512 residues: Glucagon-like peptide 2 receptor (512 aa).

At 1-135 (MRRLWGPGTP…KQNVDHYHHT (135 aa)) the chain is on the extracellular side. 3 disulfides stabilise this stretch: Cys43–Cys65, Cys56–Cys97, and Cys78–Cys119. N-linked (GlcNAc...) asparagine glycosylation is present at Asn73. Residues 136-160 (LLSTLQLMYTVGYSLSLISLFLALT) traverse the membrane as a helical segment. Residues 161–172 (LFLFLRKLHCTR) are Cytoplasmic-facing. The helical transmembrane segment at 173–197 (NYIHMNLFASFILRALVVLVKDMVF) threads the bilayer. Topologically, residues 198-223 (YNSYSRRPDSESGWMSYLSEISASCR) are extracellular. A helical membrane pass occupies residues 224–247 (SVQVLLHYFVGTNHLWLLVEGLYL). At 248–261 (HALLEPTVLPERRL) the chain is on the cytoplasmic side. Residues 262–283 (WPKYLVVGWAFPMLFVIPWIFV) form a helical membrane-spanning segment. Residues 284–301 (RASLENTGCWAVNENKKI) are Extracellular-facing. Residues 302-324 (WWIIRGPILLCVTVNFFIFLKIL) form a helical membrane-spanning segment. The Cytoplasmic segment spans residues 325–348 (KLLISKFRAHQMCFRDYKYRLAKS). The chain crosses the membrane as a helical span at residues 349-367 (TLLLILLMGVHEFLFTFFT). The Extracellular portion of the chain corresponds to 368–379 (DDQVQGFSRLIR). The helical transmembrane segment at 380–400 (LFIQLTLSSFHGFLVALQYGF) threads the bilayer. The Cytoplasmic segment spans residues 401 to 512 (ASREVKAELR…MEEILEESEI (112 aa)). The disordered stretch occupies residues 458–494 (SGVSSHLTAGNLRDHGAQPHRGRGAWPRASSLSESSE).

This sequence belongs to the G-protein coupled receptor 2 family.

It is found in the cell membrane. Functionally, this is a receptor for glucagon-like peptide 2. The activity of this receptor is mediated by G proteins which activate adenylyl cyclase. The protein is Glucagon-like peptide 2 receptor (Glp2r) of Mus musculus (Mouse).